A 99-amino-acid polypeptide reads, in one-letter code: Integration host factor subunit alpha (99 aa).

A disordered region spans residues phenylalanine 49–isoleucine 73.

This sequence belongs to the bacterial histone-like protein family. Heterodimer of an alpha and a beta chain.

Functionally, this protein is one of the two subunits of integration host factor, a specific DNA-binding protein that functions in genetic recombination as well as in transcriptional and translational control. The sequence is that of Integration host factor subunit alpha (ihfA) from Serratia marcescens.